Here is a 382-residue protein sequence, read N- to C-terminus: SPRY domain-containing protein C285.10c (382 aa).

Residues 21–41 traverse the membrane as a helical segment; the sequence is LAILFIFIALAAVIVLLICLL. One can recognise a B30.2/SPRY domain in the interval 79–284; that stretch reads GFSLLDDMGK…LHVNLGQAGY (206 aa). A disordered region spans residues 304–382; that stretch reads APPPSYSTSQ…MHSMPATDEV (79 aa). 2 stretches are compositionally biased toward polar residues: residues 309 to 334 and 361 to 372; these read YSTS…QGDT and FSPSSSNNQAYQ.

The protein resides in the cytoplasm. The protein localises to the membrane. The sequence is that of SPRY domain-containing protein C285.10c from Schizosaccharomyces pombe (strain 972 / ATCC 24843) (Fission yeast).